We begin with the raw amino-acid sequence, 133 residues long: uncharacterized protein (133 aa).

The chain crosses the membrane as a helical span at residues 11-31 (YFLISVFLIFIVSGITYFYST).

It localises to the membrane. This is an uncharacterized protein from Borreliella burgdorferi (strain ATCC 35210 / DSM 4680 / CIP 102532 / B31) (Borrelia burgdorferi).